The chain runs to 361 residues: Phospho-N-acetylmuramoyl-pentapeptide-transferase (361 aa).

10 consecutive transmembrane segments (helical) span residues Ser-26–Gln-46, Thr-73–Leu-93, Val-98–Ile-118, Ile-139–Thr-159, Ile-168–Phe-188, Gly-200–Ser-220, Ala-237–Phe-257, Val-264–Ile-284, Leu-289–Val-309, and Val-339–Lys-359.

The protein belongs to the glycosyltransferase 4 family. MraY subfamily. Mg(2+) serves as cofactor.

The protein resides in the cell inner membrane. The catalysed reaction is UDP-N-acetyl-alpha-D-muramoyl-L-alanyl-gamma-D-glutamyl-meso-2,6-diaminopimeloyl-D-alanyl-D-alanine + di-trans,octa-cis-undecaprenyl phosphate = di-trans,octa-cis-undecaprenyl diphospho-N-acetyl-alpha-D-muramoyl-L-alanyl-D-glutamyl-meso-2,6-diaminopimeloyl-D-alanyl-D-alanine + UMP. The protein operates within cell wall biogenesis; peptidoglycan biosynthesis. Catalyzes the initial step of the lipid cycle reactions in the biosynthesis of the cell wall peptidoglycan: transfers peptidoglycan precursor phospho-MurNAc-pentapeptide from UDP-MurNAc-pentapeptide onto the lipid carrier undecaprenyl phosphate, yielding undecaprenyl-pyrophosphoryl-MurNAc-pentapeptide, known as lipid I. This Xylella fastidiosa (strain 9a5c) protein is Phospho-N-acetylmuramoyl-pentapeptide-transferase.